Reading from the N-terminus, the 361-residue chain is Nicotinate-nucleotide--dimethylbenzimidazole phosphoribosyltransferase (361 aa).

The Proton acceptor role is filled by E320.

The protein belongs to the CobT family. Homodimer.

The catalysed reaction is 5,6-dimethylbenzimidazole + nicotinate beta-D-ribonucleotide = alpha-ribazole 5'-phosphate + nicotinate + H(+). It functions in the pathway nucleoside biosynthesis; alpha-ribazole biosynthesis; alpha-ribazole from 5,6-dimethylbenzimidazole: step 1/2. Functionally, catalyzes the synthesis of alpha-ribazole-5'-phosphate from nicotinate mononucleotide (NAMN) and 5,6-dimethylbenzimidazole (DMB). The sequence is that of Nicotinate-nucleotide--dimethylbenzimidazole phosphoribosyltransferase from Shigella boydii serotype 18 (strain CDC 3083-94 / BS512).